Consider the following 229-residue polypeptide: 7-cyano-7-deazaguanine synthase (229 aa).

8–18 contacts ATP; sequence FSGGQDSTTCL. Zn(2+) contacts are provided by cysteine 187, cysteine 196, cysteine 199, and cysteine 202.

The protein belongs to the QueC family. Requires Zn(2+) as cofactor.

It carries out the reaction 7-carboxy-7-deazaguanine + NH4(+) + ATP = 7-cyano-7-deazaguanine + ADP + phosphate + H2O + H(+). It functions in the pathway purine metabolism; 7-cyano-7-deazaguanine biosynthesis. In terms of biological role, catalyzes the ATP-dependent conversion of 7-carboxy-7-deazaguanine (CDG) to 7-cyano-7-deazaguanine (preQ(0)). In Shewanella halifaxensis (strain HAW-EB4), this protein is 7-cyano-7-deazaguanine synthase.